Here is a 598-residue protein sequence, read N- to C-terminus: Arginine--tRNA ligase (598 aa).

The 'HIGH' region motif lies at 131-141 (ANPTGPMHVGH). Residues 288-308 (KLPPPKSKKGQPPAQPQPDEE) form a disordered region.

The protein belongs to the class-I aminoacyl-tRNA synthetase family. Monomer.

Its subcellular location is the cytoplasm. It catalyses the reaction tRNA(Arg) + L-arginine + ATP = L-arginyl-tRNA(Arg) + AMP + diphosphate. This chain is Arginine--tRNA ligase, found in Anaeromyxobacter sp. (strain K).